Here is a 206-residue protein sequence, read N- to C-terminus: Guanylate kinase (206 aa).

The 179-residue stretch at 6 to 184 (GILFILSGPS…AVDKVKTIIK (179 aa)) folds into the Guanylate kinase-like domain. 13 to 20 (GPSGVGKG) provides a ligand contact to ATP.

It belongs to the guanylate kinase family.

It localises to the cytoplasm. The enzyme catalyses GMP + ATP = GDP + ADP. In terms of biological role, essential for recycling GMP and indirectly, cGMP. This is Guanylate kinase from Oceanobacillus iheyensis (strain DSM 14371 / CIP 107618 / JCM 11309 / KCTC 3954 / HTE831).